A 238-amino-acid polypeptide reads, in one-letter code: MIAIPAIDLREGACVQLVGGSYAAEKVRVEEPLEALKQWRRHGFRAFHVVDLDAALGKGSNADAIFQLTAYERGLTFSVGGGVRDSDRVETVLSGGAEFVVVGTRAIEDAGWLADIANRFPGRVVVAADVKGREVVTRGWTAGSHRDIREVLAAFEPLPLGGLLVTAVHKEGQLSGVDLPLMREVASTSRHRLYASGGVTTMEDLRALAAAGAYGAVIGMALYTGRLDASAVAREFAG.

Aspartate 8 serves as the catalytic Proton acceptor. Aspartate 129 functions as the Proton donor in the catalytic mechanism.

Belongs to the HisA/HisF family.

The protein localises to the cytoplasm. The catalysed reaction is 1-(5-phospho-beta-D-ribosyl)-5-[(5-phospho-beta-D-ribosylamino)methylideneamino]imidazole-4-carboxamide = 5-[(5-phospho-1-deoxy-D-ribulos-1-ylimino)methylamino]-1-(5-phospho-beta-D-ribosyl)imidazole-4-carboxamide. It functions in the pathway amino-acid biosynthesis; L-histidine biosynthesis; L-histidine from 5-phospho-alpha-D-ribose 1-diphosphate: step 4/9. This Myxococcus xanthus (strain DK1622) protein is 1-(5-phosphoribosyl)-5-[(5-phosphoribosylamino)methylideneamino] imidazole-4-carboxamide isomerase.